We begin with the raw amino-acid sequence, 413 residues long: Argininosuccinate synthase (413 aa).

22 to 30 is a binding site for ATP; it reads AYSGGLDTS. Positions 100 and 105 each coordinate L-citrulline. Position 130 (Gly-130) interacts with ATP. Residues Thr-132, Asn-136, and Asp-137 each coordinate L-aspartate. Position 136 (Asn-136) interacts with L-citrulline. 5 residues coordinate L-citrulline: Arg-140, Ser-189, Ser-198, Glu-274, and Tyr-286.

It belongs to the argininosuccinate synthase family. Type 1 subfamily. In terms of assembly, homotetramer.

It localises to the cytoplasm. It carries out the reaction L-citrulline + L-aspartate + ATP = 2-(N(omega)-L-arginino)succinate + AMP + diphosphate + H(+). The protein operates within amino-acid biosynthesis; L-arginine biosynthesis; L-arginine from L-ornithine and carbamoyl phosphate: step 2/3. This chain is Argininosuccinate synthase, found in Endomicrobium trichonymphae.